Here is a 365-residue protein sequence, read N- to C-terminus: Phosphoserine aminotransferase (365 aa).

Arginine 40 contacts L-glutamate. Residues 74 to 75 (AS), phenylalanine 99, threonine 155, aspartate 177, and glutamine 200 each bind pyridoxal 5'-phosphate. Lysine 201 bears the N6-(pyridoxal phosphate)lysine mark. Residue 241–242 (NT) participates in pyridoxal 5'-phosphate binding.

Belongs to the class-V pyridoxal-phosphate-dependent aminotransferase family. SerC subfamily. Homodimer. The cofactor is pyridoxal 5'-phosphate.

The protein resides in the cytoplasm. It carries out the reaction O-phospho-L-serine + 2-oxoglutarate = 3-phosphooxypyruvate + L-glutamate. The catalysed reaction is 4-(phosphooxy)-L-threonine + 2-oxoglutarate = (R)-3-hydroxy-2-oxo-4-phosphooxybutanoate + L-glutamate. It functions in the pathway amino-acid biosynthesis; L-serine biosynthesis; L-serine from 3-phospho-D-glycerate: step 2/3. Its function is as follows. Catalyzes the reversible conversion of 3-phosphohydroxypyruvate to phosphoserine and of 3-hydroxy-2-oxo-4-phosphonooxybutanoate to phosphohydroxythreonine. This chain is Phosphoserine aminotransferase, found in Lactococcus lactis subsp. cremoris (strain SK11).